Reading from the N-terminus, the 450-residue chain is Guanine deaminase (450 aa).

Residues histidine 88 and histidine 90 each contribute to the Zn(2+) site. Substrate-binding positions include 90 to 93 (HAPQ), 218 to 219 (RF), 245 to 248 (HLSE), and aspartate 335. Zn(2+) contacts are provided by histidine 245 and aspartate 335.

The protein belongs to the metallo-dependent hydrolases superfamily. ATZ/TRZ family. The cofactor is Zn(2+).

It catalyses the reaction guanine + H2O + H(+) = xanthine + NH4(+). Its pathway is purine metabolism; guanine degradation; xanthine from guanine: step 1/1. Catalyzes the hydrolytic deamination of guanine, producing xanthine and ammonia. The chain is Guanine deaminase (guaD) from Dictyostelium discoideum (Social amoeba).